A 187-amino-acid chain; its full sequence is Elongation factor P (187 aa).

Belongs to the elongation factor P family.

It localises to the cytoplasm. It functions in the pathway protein biosynthesis; polypeptide chain elongation. Involved in peptide bond synthesis. Stimulates efficient translation and peptide-bond synthesis on native or reconstituted 70S ribosomes in vitro. Probably functions indirectly by altering the affinity of the ribosome for aminoacyl-tRNA, thus increasing their reactivity as acceptors for peptidyl transferase. The polypeptide is Elongation factor P (Helicobacter hepaticus (strain ATCC 51449 / 3B1)).